The primary structure comprises 304 residues: uncharacterized protein (304 aa).

The segment at 1-183 (MTAPNEPGAL…ARVQLSARRS (183 aa)) is disordered. The span at 132-166 (PTPRAPQRNPAPARPAEGGAGSRGDSAAGSSGGRS) shows a compositional bias: low complexity. 2 helical membrane passes run 206–226 (LLLSVALFFVWMITVAFLYLV) and 265–285 (FLIGLVNIVLMTALATIGAFV).

It to M.leprae ML0007.

The protein resides in the cell membrane. This is an uncharacterized protein from Mycobacterium tuberculosis (strain ATCC 25618 / H37Rv).